Consider the following 223-residue polypeptide: Phosphoribosylformylglycinamidine synthase subunit PurQ (223 aa).

The 221-residue stretch at 3 to 223 (FAVLVFPGSN…MVKSWREQHV (221 aa)) folds into the Glutamine amidotransferase type-1 domain. The active-site Nucleophile is cysteine 85. Active-site residues include histidine 193 and glutamate 195.

In terms of assembly, part of the FGAM synthase complex composed of 1 PurL, 1 PurQ and 2 PurS subunits.

Its subcellular location is the cytoplasm. It carries out the reaction N(2)-formyl-N(1)-(5-phospho-beta-D-ribosyl)glycinamide + L-glutamine + ATP + H2O = 2-formamido-N(1)-(5-O-phospho-beta-D-ribosyl)acetamidine + L-glutamate + ADP + phosphate + H(+). It catalyses the reaction L-glutamine + H2O = L-glutamate + NH4(+). Its pathway is purine metabolism; IMP biosynthesis via de novo pathway; 5-amino-1-(5-phospho-D-ribosyl)imidazole from N(2)-formyl-N(1)-(5-phospho-D-ribosyl)glycinamide: step 1/2. Functionally, part of the phosphoribosylformylglycinamidine synthase complex involved in the purines biosynthetic pathway. Catalyzes the ATP-dependent conversion of formylglycinamide ribonucleotide (FGAR) and glutamine to yield formylglycinamidine ribonucleotide (FGAM) and glutamate. The FGAM synthase complex is composed of three subunits. PurQ produces an ammonia molecule by converting glutamine to glutamate. PurL transfers the ammonia molecule to FGAR to form FGAM in an ATP-dependent manner. PurS interacts with PurQ and PurL and is thought to assist in the transfer of the ammonia molecule from PurQ to PurL. The polypeptide is Phosphoribosylformylglycinamidine synthase subunit PurQ (Staphylococcus aureus (strain bovine RF122 / ET3-1)).